We begin with the raw amino-acid sequence, 289 residues long: NAD kinase (289 aa).

The active-site Proton acceptor is the aspartate 82. NAD(+) is bound by residues 82 to 83 (DG), arginine 87, 150 to 151 (NE), lysine 161, arginine 178, aspartate 180, 191 to 196 (TAYAMS), alanine 215, and glutamine 250.

The protein belongs to the NAD kinase family. A divalent metal cation is required as a cofactor.

The protein resides in the cytoplasm. The catalysed reaction is NAD(+) + ATP = ADP + NADP(+) + H(+). Its function is as follows. Involved in the regulation of the intracellular balance of NAD and NADP, and is a key enzyme in the biosynthesis of NADP. Catalyzes specifically the phosphorylation on 2'-hydroxyl of the adenosine moiety of NAD to yield NADP. In Methanosarcina mazei (strain ATCC BAA-159 / DSM 3647 / Goe1 / Go1 / JCM 11833 / OCM 88) (Methanosarcina frisia), this protein is NAD kinase.